We begin with the raw amino-acid sequence, 726 residues long: MIIVKVILPIPIRQYFTYLMPDFMCPIIGGRILVPFNSKDVIGIVASFYKKNNVDQANFKHIKALIDTESLYSNMVLDIISWISNNYHCPAGNLFFSILPKILHSDYIIKNKYICQWSITKKGQELNLNYFKRRKKQLYVLLILKKKHILSTELKKYNISKIILKKLEIQELCKVNLNYKISFKRKIIRTKKKLFFNKKISIVLNDVLKKQCFSSWLLTRVNLYLKVKFYLGLIQSVLYKGVQILILVPYIKNINTIAFFLEKYFNASIDVMHSKLTSSKYFSNWVRTKNGENSIVIGTGKSIFLPFLKLGLIILLEEHNLKYKSINQCRYNIRDLGILRAYKEKIPIILDSETPSLKTLNNVLHRKCFYIKLNKYNHVNQINNNIINLKTEKIKFGLSLTLINEIYKNFTGKQVLLIFNKFVLFFFVLMCQKCNEIFKCTNCDDYFEINQYRNILFCKFCLIQIKKPIFCYNCGSFSLIVFKIGAEEIKKEMHSIFPKIPFFFFLNEKNINKNILNTKSFEFAISSPCIIIVTEELVQNYYFPHVKLISLICIDNYFLSFNYRAMEYFAQFYINLNQLTRSTKKSCKIFIQTSFPNDINLKEICNNGYFSFSKKAMAIRKSFLLPPWSFQTIVYSASTNTKYNIIFLSLMRKILQKKSRKYNCFLWVLGPNNAFLSINKHKYFHQLLIQCSSRVALNNVLNESIDVINIFTISKRVKWFIDIEPN.

Ile-234 lines the ATP pocket. The 140-residue stretch at 234 to 373 (IQSVLYKGVQ…LHRKCFYIKL (140 aa)) folds into the Helicase ATP-binding domain. The short motif at 316–319 (LEEH) is the DEAH box element. Zn(2+) contacts are provided by Cys-431, Cys-434, Cys-440, Cys-443, Cys-458, Cys-461, Cys-471, and Cys-474.

Belongs to the helicase family. PriA subfamily. In terms of assembly, component of the replication restart primosome. Requires Zn(2+) as cofactor.

It carries out the reaction Couples ATP hydrolysis with the unwinding of duplex DNA by translocating in the 3'-5' direction.. The catalysed reaction is ATP + H2O = ADP + phosphate + H(+). Initiates the restart of stalled replication forks, which reloads the replicative helicase on sites other than the origin of replication. Recognizes and binds to abandoned replication forks and remodels them to uncover a helicase loading site. Promotes assembly of the primosome at these replication forks. The chain is Replication restart protein PriA from Buchnera aphidicola subsp. Acyrthosiphon pisum (strain APS) (Acyrthosiphon pisum symbiotic bacterium).